The sequence spans 248 residues: Mitochondrial import inner membrane translocase subunit Tim21 (248 aa).

A mitochondrion-targeting transit peptide spans 1 to 18 (MICTFLRAVQYTEKLHRS). Positions 67-98 (TQGPSPRKAKEDGSKQVSVHRSQRGGTAVPTS) are disordered. The helical transmembrane segment at 108–128 (FTYLIVVLFGISITGGLFYTI) threads the bilayer.

It belongs to the TIM21 family. As to quaternary structure, component of the TIM23 complex. Component of the MITRAC (mitochondrial translation regulation assembly intermediate of cytochrome c oxidase complex) complex, the core components of this complex being COA3/MITRAC12 and COX14. Interacts with COA3 and MT-CO1/COX1.

It is found in the mitochondrion membrane. Its function is as follows. Participates in the translocation of transit peptide-containing proteins across the mitochondrial inner membrane. Also required for assembly of mitochondrial respiratory chain complex I and complex IV as component of the MITRAC (mitochondrial translation regulation assembly intermediate of cytochrome c oxidase complex) complex. Probably shuttles between the presequence translocase and respiratory-chain assembly intermediates in a process that promotes incorporation of early nuclear-encoded subunits into these complexes. In Homo sapiens (Human), this protein is Mitochondrial import inner membrane translocase subunit Tim21 (TIMM21).